A 222-amino-acid chain; its full sequence is MQFFIDTANLDEIRAAAELGVLDGVTTNPSLIAKVAGSSKPFTWQAFKDHIAAICEIVDGPVSAEVTALDANGMIDQGEELADIDGKVVIKCPVTLEGLKAISYFDENDIMTNATLVFSPNQALLAAKAGATYVSPFVGRLDDVSTNGMELIRQIVTIYRNYDFITEVIVASVRHSQHVVEAAMIGADIATIPFNVIKQLISHPLTEAGLKKFTEDAAIIQM.

The active-site Schiff-base intermediate with substrate is Lys91.

It belongs to the transaldolase family. Type 3B subfamily.

The protein localises to the cytoplasm. The catalysed reaction is D-sedoheptulose 7-phosphate + D-glyceraldehyde 3-phosphate = D-erythrose 4-phosphate + beta-D-fructose 6-phosphate. Its pathway is carbohydrate degradation; pentose phosphate pathway; D-glyceraldehyde 3-phosphate and beta-D-fructose 6-phosphate from D-ribose 5-phosphate and D-xylulose 5-phosphate (non-oxidative stage): step 2/3. Transaldolase is important for the balance of metabolites in the pentose-phosphate pathway. The chain is Probable transaldolase from Chlorobium chlorochromatii (strain CaD3).